The primary structure comprises 274 residues: AA9 family lytic polysaccharide monooxygenase A (274 aa).

Positions 1-22 (MHVPQFISTGALLALLARPAAA) are cleaved as a signal peptide. Cu(2+) is bound at residue H23. C63 and C194 are disulfide-bonded. (1,4-beta-D-glucosyl)n-binding residues include G67, D98, and S100. H101 contacts Cu(2+). H174 contacts O2. D177 contacts (1,4-beta-D-glucosyl)n. Position 191 (Y191) interacts with Cu(2+).

Belongs to the polysaccharide monooxygenase AA9 family. It depends on Cu(2+) as a cofactor.

Its subcellular location is the secreted. It carries out the reaction [(1-&gt;4)-beta-D-glucosyl]n+m + reduced acceptor + O2 = 4-dehydro-beta-D-glucosyl-[(1-&gt;4)-beta-D-glucosyl]n-1 + [(1-&gt;4)-beta-D-glucosyl]m + acceptor + H2O.. Lytic polysaccharide monooxygenase (LPMO) that depolymerizes crystalline and amorphous polysaccharides via the oxidation of scissile alpha- or beta-(1-4)-glycosidic bonds, yielding C4 oxidation products. Catalysis by LPMOs requires the reduction of the active-site copper from Cu(II) to Cu(I) by a reducing agent and H(2)O(2) or O(2) as a cosubstrate. Cleaves a range of polysaccharides, including cellulose, xyloglucan, mixed-linkage glucan and glucomannan. This is AA9 family lytic polysaccharide monooxygenase A from Collariella virescens (Soil fungus).